We begin with the raw amino-acid sequence, 153 residues long: Mitochondrial fission 1 protein (153 aa).

Residues 1 to 124 (MTQLPYAVDA…LIDDKVTKEG (124 aa)) lie on the Cytoplasmic side of the membrane. Residues 73 to 106 (RECLYYLALGNYKLGNYAQARKYNDALLENEPAN) form a TPR repeat. The helical transmembrane segment at 125-145 (LMGVAIISGVAVAAGVIGGVL) threads the bilayer. Residues 146–153 (LRNLGRKR) lie on the Mitochondrial intermembrane side of the membrane.

It belongs to the FIS1 family.

The protein localises to the mitochondrion outer membrane. In terms of biological role, has a role in mitochondrial fission. Has a role in outer membrane fission but not matrix separation. This chain is Mitochondrial fission 1 protein (mtp-2), found in Neurospora crassa (strain ATCC 24698 / 74-OR23-1A / CBS 708.71 / DSM 1257 / FGSC 987).